Consider the following 504-residue polypeptide: Ribonuclease Y (504 aa).

A helical transmembrane segment spans residues 2-22 (TTSIVIGVVLVTVGLTFGWTI). The region spanning 194–279 (TVSTVNLPSE…EIVQKVTQEV (86 aa)) is the KH domain. Positions 320 to 413 (VLYHSKEVAL…VQVADAISAA (94 aa)) constitute an HD domain.

This sequence belongs to the RNase Y family.

Its subcellular location is the cell membrane. Its function is as follows. Endoribonuclease that initiates mRNA decay. This is Ribonuclease Y from Treponema pallidum (strain Nichols).